The chain runs to 202 residues: dITP/XTP pyrophosphatase (202 aa).

Residue 7–12 (SRNEAK) coordinates substrate. The active-site Proton acceptor is the aspartate 68. Residue aspartate 68 coordinates Mg(2+). Substrate-binding positions include serine 69, 156–159 (FGYD), lysine 179, and 184–185 (HR).

It belongs to the HAM1 NTPase family. In terms of assembly, homodimer. It depends on Mg(2+) as a cofactor.

It carries out the reaction XTP + H2O = XMP + diphosphate + H(+). The enzyme catalyses dITP + H2O = dIMP + diphosphate + H(+). It catalyses the reaction ITP + H2O = IMP + diphosphate + H(+). Pyrophosphatase that catalyzes the hydrolysis of nucleoside triphosphates to their monophosphate derivatives, with a high preference for the non-canonical purine nucleotides XTP (xanthosine triphosphate), dITP (deoxyinosine triphosphate) and ITP. Seems to function as a house-cleaning enzyme that removes non-canonical purine nucleotides from the nucleotide pool, thus preventing their incorporation into DNA/RNA and avoiding chromosomal lesions. The protein is dITP/XTP pyrophosphatase of Frankia alni (strain DSM 45986 / CECT 9034 / ACN14a).